The sequence spans 332 residues: Holliday junction branch migration complex subunit RuvB (332 aa).

Residues 1–181 (MSRILDNEIM…FGITGHMEYY (181 aa)) form a large ATPase domain (RuvB-L) region. ATP contacts are provided by residues Leu-20, Arg-21, Gly-62, Lys-65, Thr-66, Thr-67, 128-130 (EDF), Arg-171, Tyr-181, and Arg-218. Thr-66 serves as a coordination point for Mg(2+). The tract at residues 182-252 (AHADLTEIVE…ITDKALTMLD (71 aa)) is small ATPAse domain (RuvB-S). The tract at residues 255–332 (HEGLDYVDQK…EHLGYEYSEK (78 aa)) is head domain (RuvB-H). 4 residues coordinate DNA: Arg-291, Arg-310, Arg-312, and Arg-315.

The protein belongs to the RuvB family. Homohexamer. Forms an RuvA(8)-RuvB(12)-Holliday junction (HJ) complex. HJ DNA is sandwiched between 2 RuvA tetramers; dsDNA enters through RuvA and exits via RuvB. An RuvB hexamer assembles on each DNA strand where it exits the tetramer. Each RuvB hexamer is contacted by two RuvA subunits (via domain III) on 2 adjacent RuvB subunits; this complex drives branch migration. In the full resolvosome a probable DNA-RuvA(4)-RuvB(12)-RuvC(2) complex forms which resolves the HJ.

Its subcellular location is the cytoplasm. The catalysed reaction is ATP + H2O = ADP + phosphate + H(+). The RuvA-RuvB-RuvC complex processes Holliday junction (HJ) DNA during genetic recombination and DNA repair, while the RuvA-RuvB complex plays an important role in the rescue of blocked DNA replication forks via replication fork reversal (RFR). RuvA specifically binds to HJ cruciform DNA, conferring on it an open structure. The RuvB hexamer acts as an ATP-dependent pump, pulling dsDNA into and through the RuvAB complex. RuvB forms 2 homohexamers on either side of HJ DNA bound by 1 or 2 RuvA tetramers; 4 subunits per hexamer contact DNA at a time. Coordinated motions by a converter formed by DNA-disengaged RuvB subunits stimulates ATP hydrolysis and nucleotide exchange. Immobilization of the converter enables RuvB to convert the ATP-contained energy into a lever motion, pulling 2 nucleotides of DNA out of the RuvA tetramer per ATP hydrolyzed, thus driving DNA branch migration. The RuvB motors rotate together with the DNA substrate, which together with the progressing nucleotide cycle form the mechanistic basis for DNA recombination by continuous HJ branch migration. Branch migration allows RuvC to scan DNA until it finds its consensus sequence, where it cleaves and resolves cruciform DNA. The polypeptide is Holliday junction branch migration complex subunit RuvB (Streptococcus pneumoniae serotype 2 (strain D39 / NCTC 7466)).